The primary structure comprises 392 residues: Chaperone protein DnaJ 2 (392 aa).

The 66-residue stretch at D10–R75 folds into the J domain. The CR-type zinc-finger motif lies at G161–T239. Positions 174, 177, 191, 194, 213, 216, 227, and 230 each coordinate Zn(2+). CXXCXGXG motif repeat units lie at residues C174–G181, C191–G198, C213–G220, and C227–G234.

It belongs to the DnaJ family. Homodimer. Requires Zn(2+) as cofactor.

Its subcellular location is the cytoplasm. In terms of biological role, participates actively in the response to hyperosmotic and heat shock by preventing the aggregation of stress-denatured proteins and by disaggregating proteins, also in an autonomous, DnaK-independent fashion. Unfolded proteins bind initially to DnaJ; upon interaction with the DnaJ-bound protein, DnaK hydrolyzes its bound ATP, resulting in the formation of a stable complex. GrpE releases ADP from DnaK; ATP binding to DnaK triggers the release of the substrate protein, thus completing the reaction cycle. Several rounds of ATP-dependent interactions between DnaJ, DnaK and GrpE are required for fully efficient folding. Also involved, together with DnaK and GrpE, in the DNA replication of plasmids through activation of initiation proteins. The polypeptide is Chaperone protein DnaJ 2 (Mycolicibacterium paratuberculosis (strain ATCC BAA-968 / K-10) (Mycobacterium paratuberculosis)).